The sequence spans 465 residues: Hydroxyacid-oxoacid transhydrogenase, mitochondrial (465 aa).

An N6-acetyllysine modification is found at lysine 443. Residue serine 450 is modified to Phosphoserine.

The protein belongs to the iron-containing alcohol dehydrogenase family. Hydroxyacid-oxoacid transhydrogenase subfamily. As to expression, expressed in white and brown adipose tissues, liver, and kidney. Expression is differentiation-dependent during in vitro brown and white adipogenesis.

The protein localises to the mitochondrion. The catalysed reaction is (S)-3-hydroxybutanoate + 2-oxoglutarate = (R)-2-hydroxyglutarate + acetoacetate. It catalyses the reaction 4-hydroxybutanoate + 2-oxoglutarate = (R)-2-hydroxyglutarate + succinate semialdehyde. Its function is as follows. Catalyzes the cofactor-independent reversible oxidation of gamma-hydroxybutyrate (GHB) to succinic semialdehyde (SSA) coupled to reduction of 2-ketoglutarate (2-KG) to D-2-hydroxyglutarate (D-2-HG). L-3-hydroxybutyrate (L-3-OHB) is also a substrate for HOT when using 2-KG as hydrogen acceptor, resulting in the formation of D-2-HG. In Mus musculus (Mouse), this protein is Hydroxyacid-oxoacid transhydrogenase, mitochondrial (Adhfe1).